A 944-amino-acid chain; its full sequence is Leucine--tRNA ligase 2 (944 aa).

The 'HIGH' region signature appears at 36–46; it reads PYPNSPFHLGH. The short motif at 621-625 is the 'KMSKS' region element; it reads KMSKS. K624 contributes to the ATP binding site.

It belongs to the class-I aminoacyl-tRNA synthetase family.

The protein localises to the cytoplasm. The enzyme catalyses tRNA(Leu) + L-leucine + ATP = L-leucyl-tRNA(Leu) + AMP + diphosphate. The sequence is that of Leucine--tRNA ligase 2 from Sulfurisphaera tokodaii (strain DSM 16993 / JCM 10545 / NBRC 100140 / 7) (Sulfolobus tokodaii).